Here is a 398-residue protein sequence, read N- to C-terminus: Succinate--CoA ligase [ADP-forming] subunit beta (398 aa).

The region spanning 9–237 (RDLFETHGVP…AGGLDILELK (229 aa)) is the ATP-grasp domain. ATP-binding positions include Lys45, 52-54 (GRG), Ala94, and Glu99. Positions 191 and 205 each coordinate Mg(2+). Substrate-binding positions include Asn257 and 319–321 (GIT).

This sequence belongs to the succinate/malate CoA ligase beta subunit family. In terms of assembly, heterotetramer of two alpha and two beta subunits. It depends on Mg(2+) as a cofactor.

The catalysed reaction is succinate + ATP + CoA = succinyl-CoA + ADP + phosphate. The enzyme catalyses GTP + succinate + CoA = succinyl-CoA + GDP + phosphate. The protein operates within carbohydrate metabolism; tricarboxylic acid cycle; succinate from succinyl-CoA (ligase route): step 1/1. Succinyl-CoA synthetase functions in the citric acid cycle (TCA), coupling the hydrolysis of succinyl-CoA to the synthesis of either ATP or GTP and thus represents the only step of substrate-level phosphorylation in the TCA. The beta subunit provides nucleotide specificity of the enzyme and binds the substrate succinate, while the binding sites for coenzyme A and phosphate are found in the alpha subunit. The protein is Succinate--CoA ligase [ADP-forming] subunit beta of Corynebacterium glutamicum (strain ATCC 13032 / DSM 20300 / JCM 1318 / BCRC 11384 / CCUG 27702 / LMG 3730 / NBRC 12168 / NCIMB 10025 / NRRL B-2784 / 534).